Reading from the N-terminus, the 660-residue chain is uncharacterized protein (660 aa).

The disordered stretch occupies residues 1 to 660 (MGTPCQSARG…RNPGCPRTWR (660 aa)). Positions 67 to 80 (RPGGGNRVGAGRGR) are enriched in gly residues. A compositionally biased stretch (polar residues) spans 104–116 (SNPTGGCSDPQRS). 4 repeat units span residues 149–273 (SARN…GCPR), 274–398 (SARN…GCPR), 399–523 (SARN…GCPR), and 524–648 (SARN…GCPR). A 4 X 125 AA tandem repeats region spans residues 149–648 (SARNPGCPRT…THRRPPGCPR (500 aa)). Low complexity-rich tracts occupy residues 177–196 (RPSG…GTPA), 302–321 (RPSG…GTPA), 427–446 (RPSG…GTPA), and 552–571 (RPSG…GTPA).

This is an uncharacterized protein from Homo sapiens (Human).